The sequence spans 462 residues: Glycerol-3-phosphate dehydrogenase [NAD(+)] GPDHC1, cytosolic (462 aa).

NAD(+)-binding positions include 48 to 53, Lys-196, and Ala-235; that span reads GAGAWG. Lys-196 lines the substrate pocket. The active-site Proton acceptor is the Lys-285. The NAD(+) site is built by Arg-347 and Gln-375. 347-348 serves as a coordination point for substrate; it reads RN.

Belongs to the NAD-dependent glycerol-3-phosphate dehydrogenase family. As to expression, expressed in roots, leaves, flowers and siliques.

It localises to the cytoplasm. Its subcellular location is the cytosol. It catalyses the reaction sn-glycerol 3-phosphate + NAD(+) = dihydroxyacetone phosphate + NADH + H(+). Involved in cell redox homeostasis. Required for maintaining a steady state cellular NADH/NAD(+) ratio through a mitochondrial glycerol-3-phosphate redox shuttle. May function with the mitochondrial FAD-dependent glycerol-3-phosphate dehydrogenase SDP6 to shuttle reducing equivalents into the mitochondria for respiration. This is Glycerol-3-phosphate dehydrogenase [NAD(+)] GPDHC1, cytosolic (GPDHC1) from Arabidopsis thaliana (Mouse-ear cress).